The sequence spans 1403 residues: Centrosomal protein of 162 kDa (1403 aa).

The disordered stretch occupies residues 18 to 42 (KELSDDSFENSDKTARQSKKEMKKK). Ser-157 and Ser-160 each carry phosphoserine. Residues 170-231 (QANAELTDDE…EKISVPKQEE (62 aa)) form a disordered region. Basic and acidic residues predominate over residues 208–231 (TKDEEMPSKENSKSEKISVPKQEE). A phosphoserine mark is found at Ser-474 and Ser-475. The tract at residues 476-504 (EEEGAVMGKQVPYKKARSAPPLLKRKPQS) is disordered. The span at 487–502 (PYKKARSAPPLLKRKP) shows a compositional bias: basic residues. 4 coiled-coil regions span residues 617–670 (KRVQ…QDNY), 698–1121 (VTGE…MLSN), 1171–1206 (EVLQ…QFEN), and 1235–1386 (CQNA…LHRQ).

Belongs to the CEP162 family. In terms of assembly, interacts with CEP290. Interacts with CPNE4. Interacts with alpha-tubulin.

It is found in the cytoplasm. It localises to the cytoskeleton. Its subcellular location is the microtubule organizing center. The protein localises to the centrosome. The protein resides in the centriole. It is found in the spindle. It localises to the nucleus. Its function is as follows. Required to promote assembly of the transition zone in primary cilia. Acts by specifically recognizing and binding the axonemal microtubule. Localizes to the distal ends of centrioles before ciliogenesis and directly binds to axonemal microtubule, thereby promoting and restricting transition zone formation specifically at the cilia base. Required to mediate CEP290 association with microtubules. The protein is Centrosomal protein of 162 kDa (CEP162) of Homo sapiens (Human).